A 309-amino-acid polypeptide reads, in one-letter code: Oxygen-dependent coproporphyrinogen-III oxidase (309 aa).

Residue S100 coordinates substrate. Residues H104 and H114 each contribute to the a divalent metal cation site. H114 acts as the Proton donor in catalysis. 116-118 contacts substrate; that stretch reads NVR. A divalent metal cation is bound by residues H153 and H183. Residues 248-283 are important for dimerization; that stretch reads YAEFNLVYDRGTLFGLQSGGRTESILMSLPPIVHWE. Residue 266-268 participates in substrate binding; that stretch reads GGR.

This sequence belongs to the aerobic coproporphyrinogen-III oxidase family. Homodimer. A divalent metal cation is required as a cofactor.

It is found in the cytoplasm. The catalysed reaction is coproporphyrinogen III + O2 + 2 H(+) = protoporphyrinogen IX + 2 CO2 + 2 H2O. The protein operates within porphyrin-containing compound metabolism; protoporphyrin-IX biosynthesis; protoporphyrinogen-IX from coproporphyrinogen-III (O2 route): step 1/1. In terms of biological role, involved in the heme biosynthesis. Catalyzes the aerobic oxidative decarboxylation of propionate groups of rings A and B of coproporphyrinogen-III to yield the vinyl groups in protoporphyrinogen-IX. This Legionella pneumophila (strain Lens) protein is Oxygen-dependent coproporphyrinogen-III oxidase.